Here is a 349-residue protein sequence, read N- to C-terminus: Lipoyl synthase (349 aa).

Positions 55, 60, 66, 81, 85, 88, and 292 each coordinate [4Fe-4S] cluster. The 215-residue stretch at 67 to 281 folds into the Radical SAM core domain; that stretch reads WEDREATFLI…SDAAYELGIK (215 aa). The segment at 321–349 is disordered; that stretch reads LDSTTSQEASTLLERYGASEDTPVTASRR.

The protein belongs to the radical SAM superfamily. Lipoyl synthase family. [4Fe-4S] cluster serves as cofactor.

The protein resides in the cytoplasm. It catalyses the reaction [[Fe-S] cluster scaffold protein carrying a second [4Fe-4S](2+) cluster] + N(6)-octanoyl-L-lysyl-[protein] + 2 oxidized [2Fe-2S]-[ferredoxin] + 2 S-adenosyl-L-methionine + 4 H(+) = [[Fe-S] cluster scaffold protein] + N(6)-[(R)-dihydrolipoyl]-L-lysyl-[protein] + 4 Fe(3+) + 2 hydrogen sulfide + 2 5'-deoxyadenosine + 2 L-methionine + 2 reduced [2Fe-2S]-[ferredoxin]. The protein operates within protein modification; protein lipoylation via endogenous pathway; protein N(6)-(lipoyl)lysine from octanoyl-[acyl-carrier-protein]: step 2/2. Functionally, catalyzes the radical-mediated insertion of two sulfur atoms into the C-6 and C-8 positions of the octanoyl moiety bound to the lipoyl domains of lipoate-dependent enzymes, thereby converting the octanoylated domains into lipoylated derivatives. This Corynebacterium jeikeium (strain K411) protein is Lipoyl synthase.